The chain runs to 268 residues: Glutamate racemase (268 aa).

Residues Asp10 to Ser11 and Tyr42 to Gly43 each bind substrate. Cys73 serves as the catalytic Proton donor/acceptor. Substrate is bound at residue Asn74 to Thr75. The Proton donor/acceptor role is filled by Cys184. Thr185 to His186 provides a ligand contact to substrate.

The protein belongs to the aspartate/glutamate racemases family.

It catalyses the reaction L-glutamate = D-glutamate. It functions in the pathway cell wall biogenesis; peptidoglycan biosynthesis. Provides the (R)-glutamate required for cell wall biosynthesis. The sequence is that of Glutamate racemase from Carnobacterium sp. (strain St2).